We begin with the raw amino-acid sequence, 404 residues long: Growth/differentiation factor 6-A (404 aa).

The first 24 residues, 1-24, serve as a signal peptide directing secretion; the sequence is MDALRAVAFYALFVFLWSLPCCQS. A propeptide spanning residues 25 to 284 is cleaved from the precursor; that stretch reads AALISQKRSK…LQFKARRRRR (260 aa). Asparagine 91 is a glycosylation site (N-linked (GlcNAc...) asparagine). The interval 263 to 304 is disordered; it reads KSRGDDDEEESALQFKARRRRRTALNNRHGKRHGKKSKSRCS. Over residues 278–304 the composition is skewed to basic residues; sequence KARRRRRTALNNRHGKRHGKKSKSRCS. 3 disulfide bridges follow: cysteine 303–cysteine 369, cysteine 332–cysteine 401, and cysteine 336–cysteine 403.

Belongs to the TGF-beta family. In terms of assembly, homodimer; disulfide-linked. In terms of tissue distribution, first expressed in late gastrula stage embryos (9.5 hours post fertilization (hpf)) in anterior neuroectoderm corresponding to the future dorsal part of the brain. Shortly after tailbud formation (11 hpf), expression expands to the entire neural region and is subsequently expressed in derivatives of the lateral neural plate and migrating neural crest cells, with the future midbrain and hindbrain showing strong expression. Also expressed weakly and transiently in the posterior embryo from 11.5 hpf to 15 hpf in the lateral mesoderm, and in ectoderm above the neural keel. At 14 hpf, expressed along the entire length of the embryo and starting around the 16-somite stage, expressed in the dorsal quadrant of the retina, representing the distal tip of the eye anlage. At this stage, also expressed in the hatching gland and the hypochord. At 24 hpf, expressed in the roof plate outlining the fourth brain ventricle, in the posterior hypochord, the primitive gut endoderm, the ventral tail mesenchyme, the dorsal part of the neural tube and the dorsal fin. Weakly expressed in the dorsal part of the posterior spinal cord and in blood cell precursors.

It localises to the secreted. In terms of biological role, growth factor that controls proliferation and cellular differentiation in the retina. Plays a key role in regulating apoptosis during retinal development. Establishes dorsal-ventral positional information in the retina and controls the formation of the retinotectal map. Functions maternally in dorsal/ventral patterning to induce the expression of the zygotic bmp2b and bmp4 genes and ventralize embryos. Zygotic expression does not appear to regulate axis specification, but instead functions to establish the integrity of the axial vessels during embryonic development. May be involved in maintaining the identity of cells of the dorsal-most neural tube and of at least a subset of neural crest cells. The protein is Growth/differentiation factor 6-A (gdf6a) of Danio rerio (Zebrafish).